An 827-amino-acid chain; its full sequence is Multiphosphoryl transfer protein (827 aa).

One can recognise a PTS EIIA type-2 domain in the interval 2 to 142; sequence IPLTSELVAI…AVIVARLTGA (141 aa). His62 functions as the Tele-phosphohistidine intermediate; for EIIA activity in the catalytic mechanism. Residue His62 is modified to Phosphohistidine; by HPr. One can recognise an HPr domain in the interval 157–245; the sequence is AQGIDVVVTG…AFEAGLEDEE (89 aa). His171 serves as the catalytic Pros-phosphohistidine intermediate; for HPr activity. Phosphohistidine; by EI is present on His171. The interval 270–827 is PTS EI; sequence EGRTLVGISS…TTAAEVRGLK (558 aa). His457 serves as the catalytic Tele-phosphohistidine intermediate; for PTS EI activity. Phosphohistidine; by autocatalysis is present on His457. Residues Arg564 and Arg600 each contribute to the phosphoenolpyruvate site. Residues Glu693 and Asp717 each contribute to the Mg(2+) site. Phosphoenolpyruvate-binding positions include 716–717 and Arg727; that span reads ND. Cys764 acts as the Proton donor in catalysis.

The protein belongs to the PEP-utilizing enzyme family. The cofactor is Mg(2+).

The protein resides in the cytoplasm. The catalysed reaction is L-histidyl-[protein] + phosphoenolpyruvate = N(pros)-phospho-L-histidyl-[protein] + pyruvate. Its function is as follows. The phosphoenolpyruvate-dependent sugar phosphotransferase system (sugar PTS), a major carbohydrate active transport system, catalyzes the phosphorylation of incoming sugar substrates concomitantly with their translocation across the cell membrane. The enzyme II FruAB PTS system is involved in fructose transport. The polypeptide is Multiphosphoryl transfer protein (Rhodobacter capsulatus (Rhodopseudomonas capsulata)).